The sequence spans 214 residues: Alpha-S1-casein (214 aa).

A signal peptide spans 1-15; sequence MKLLILTCLVAVALA. A phosphoserine mark is found at serine 63, serine 79, serine 81, serine 82, serine 83, and serine 90. Repeats lie at residues 85–99 and 125–140; these read EIVP…IQKE and EIVP…SMKE.

It belongs to the alpha-casein family. Mammary gland specific. Secreted in milk.

Its subcellular location is the secreted. Important role in the capacity of milk to transport calcium phosphate. The protein is Alpha-S1-casein (CSN1S1) of Bubalus bubalis (Domestic water buffalo).